The primary structure comprises 429 residues: U3 small nucleolar RNA-associated protein 18 homolog (429 aa).

WD repeat units follow at residues 117 to 156 (RYTRGITVVKFHKTRPVLIVADQGGNVQLFKVSREVKKDR), 295 to 336 (TDDG…NSTN), 345 to 386 (NLVT…TFKN), and 392 to 428 (GKVTHARCVEFSPNGGYMAVGNDDGRLHVFEIHHFTD).

This sequence belongs to the WD repeat UTP18 family.

It localises to the nucleus. The protein resides in the nucleolus. In terms of biological role, involved in nucleolar processing of pre-18S ribosomal RNA. The polypeptide is U3 small nucleolar RNA-associated protein 18 homolog (Caenorhabditis elegans).